Consider the following 120-residue polypeptide: Prefoldin subunit beta (120 aa).

Belongs to the prefoldin subunit beta family. As to quaternary structure, heterohexamer of two alpha and four beta subunits.

Its subcellular location is the cytoplasm. Functionally, molecular chaperone capable of stabilizing a range of proteins. Seems to fulfill an ATP-independent, HSP70-like function in archaeal de novo protein folding. The protein is Prefoldin subunit beta (pfdB) of Methanopyrus kandleri (strain AV19 / DSM 6324 / JCM 9639 / NBRC 100938).